The primary structure comprises 412 residues: Serine hydroxymethyltransferase (412 aa).

(6S)-5,6,7,8-tetrahydrofolate is bound by residues leucine 117 and 121 to 123 (GHL). Position 226 is an N6-(pyridoxal phosphate)lysine (lysine 226). 349 to 351 (SPF) is a (6S)-5,6,7,8-tetrahydrofolate binding site.

It belongs to the SHMT family. As to quaternary structure, homodimer. It depends on pyridoxal 5'-phosphate as a cofactor.

The protein localises to the cytoplasm. It catalyses the reaction (6R)-5,10-methylene-5,6,7,8-tetrahydrofolate + glycine + H2O = (6S)-5,6,7,8-tetrahydrofolate + L-serine. It participates in one-carbon metabolism; tetrahydrofolate interconversion. The protein operates within amino-acid biosynthesis; glycine biosynthesis; glycine from L-serine: step 1/1. Functionally, catalyzes the reversible interconversion of serine and glycine with tetrahydrofolate (THF) serving as the one-carbon carrier. This reaction serves as the major source of one-carbon groups required for the biosynthesis of purines, thymidylate, methionine, and other important biomolecules. Also exhibits THF-independent aldolase activity toward beta-hydroxyamino acids, producing glycine and aldehydes, via a retro-aldol mechanism. The protein is Serine hydroxymethyltransferase of Geobacillus kaustophilus (strain HTA426).